The primary structure comprises 136 residues: Nucleoside diphosphate kinase (136 aa).

The ATP site is built by lysine 10, phenylalanine 58, arginine 86, threonine 92, arginine 104, and asparagine 114. The active-site Pros-phosphohistidine intermediate is histidine 117.

This sequence belongs to the NDK family. As to quaternary structure, homotetramer. The cofactor is Mg(2+).

Its subcellular location is the cytoplasm. The catalysed reaction is a 2'-deoxyribonucleoside 5'-diphosphate + ATP = a 2'-deoxyribonucleoside 5'-triphosphate + ADP. It carries out the reaction a ribonucleoside 5'-diphosphate + ATP = a ribonucleoside 5'-triphosphate + ADP. In terms of biological role, major role in the synthesis of nucleoside triphosphates other than ATP. The ATP gamma phosphate is transferred to the NDP beta phosphate via a ping-pong mechanism, using a phosphorylated active-site intermediate. The chain is Nucleoside diphosphate kinase from Mycobacterium leprae (strain TN).